We begin with the raw amino-acid sequence, 128 residues long: Protein ripply2 (128 aa).

The disordered stretch occupies residues 1 to 64 (MDTTESAESA…ALPSGPGMAE (64 aa)). Low complexity predominate over residues 17–28 (PSRSRCPPSAQP). A WRPW motif motif is present at residues 34–37 (WRPW). The tract at residues 74–109 (HPVRLFWPKSKCYDYLYQEAETLLKNFPIQATISFY) is ripply homology domain.

This sequence belongs to the ripply family. In terms of tissue distribution, expressed in the embryonic anterior presomitic mesoderm. First expressed in S-I at 8.5 dpc, where expression is maintained until 13.5 dpc, with an additional stripe of expression sometimes seen in the rostral part of S0 and S-I.

It is found in the nucleus. In terms of biological role, plays a role in somitogenesis. Required for somite segregation and establishment of rostrocaudal polarity in somites. The sequence is that of Protein ripply2 from Mus musculus (Mouse).